A 148-amino-acid polypeptide reads, in one-letter code: Leghemoglobin-1 (148 aa).

Residues 2–146 (GFTDKQEALV…LATAIKKAMK (145 aa)) form the Globin domain. Residues Tyr-24 and Tyr-29 each carry the nitrated tyrosine modification. Position 44 (Ser-44) interacts with heme b. Ser-44 carries the post-translational modification Phosphoserine. An O2-binding site is contributed by His-61. Heme b contacts are provided by His-93 and Lys-96. Tyr-134 carries the post-translational modification Nitrated tyrosine.

Belongs to the plant globin family. Monomer. Nitrated in effective nodules and particularly in hypoxic conditions; this mechanism may play a protective role in the symbiosis by buffering toxic peroxynitrite NO(2)(-). Nitration level decrease during nodule senescence. In terms of processing, phosphorylation at Ser-44 disrupts the molecular environment of its porphyrin ring oxygen binding pocket, thus leading to a reduced oxygen consumption and to the delivery of oxygen O(2) to symbiosomes. As to expression, root nodules.

Its subcellular location is the cytoplasm. It localises to the cytosol. The protein localises to the nucleus. Its function is as follows. Leghemoglobin that reversibly binds oxygen O(2) through a pentacoordinated heme iron. In root nodules, facilitates the diffusion of oxygen to the bacteroids while preventing the bacterial nitrogenase from being inactivated by buffering dioxygen, nitric oxide and carbon monoxide, and promoting the formation of reactive oxygen species (ROS, e.g. H(2)O(2)). This role is essential for symbiotic nitrogen fixation (SNF). This chain is Leghemoglobin-1, found in Pisum sativum (Garden pea).